The following is a 556-amino-acid chain: 2-succinyl-5-enolpyruvyl-6-hydroxy-3-cyclohexene-1-carboxylate synthase (556 aa).

This sequence belongs to the TPP enzyme family. MenD subfamily. Homodimer. Mg(2+) serves as cofactor. Requires Mn(2+) as cofactor. The cofactor is thiamine diphosphate.

The enzyme catalyses isochorismate + 2-oxoglutarate + H(+) = 5-enolpyruvoyl-6-hydroxy-2-succinyl-cyclohex-3-ene-1-carboxylate + CO2. It participates in quinol/quinone metabolism; 1,4-dihydroxy-2-naphthoate biosynthesis; 1,4-dihydroxy-2-naphthoate from chorismate: step 2/7. Its pathway is quinol/quinone metabolism; menaquinone biosynthesis. Its function is as follows. Catalyzes the thiamine diphosphate-dependent decarboxylation of 2-oxoglutarate and the subsequent addition of the resulting succinic semialdehyde-thiamine pyrophosphate anion to isochorismate to yield 2-succinyl-5-enolpyruvyl-6-hydroxy-3-cyclohexene-1-carboxylate (SEPHCHC). This is 2-succinyl-5-enolpyruvyl-6-hydroxy-3-cyclohexene-1-carboxylate synthase from Escherichia coli (strain SMS-3-5 / SECEC).